Here is a 712-residue protein sequence, read N- to C-terminus: Polyribonucleotide nucleotidyltransferase (712 aa).

D493 and D499 together coordinate Mg(2+). Residues 560 to 619 (PRLLTFKVDPEDIGKIIGPGGKMVRSITEATGAKVDISDDGTITVSSSVGGQAEAARAMI) form the KH domain. In terms of domain architecture, S1 motif spans 629-697 (GQVYLGKVTR…HKGRVNLTRL (69 aa)).

The protein belongs to the polyribonucleotide nucleotidyltransferase family. It depends on Mg(2+) as a cofactor.

It is found in the cytoplasm. It catalyses the reaction RNA(n+1) + phosphate = RNA(n) + a ribonucleoside 5'-diphosphate. In terms of biological role, involved in mRNA degradation. Catalyzes the phosphorolysis of single-stranded polyribonucleotides processively in the 3'- to 5'-direction. The sequence is that of Polyribonucleotide nucleotidyltransferase from Synechococcus sp. (strain JA-3-3Ab) (Cyanobacteria bacterium Yellowstone A-Prime).